We begin with the raw amino-acid sequence, 142 residues long: MKTFLTEQQIKVLMLRAKGYKQSEIAKILGTSRANVSILEKRAMEKIEKARNTLLLWEQINSKVIVEIKAGEDIFSIPEKFFKKADKVGVKVPYSTAEIITFLVEHAPVEDRLAKRDFVLFLDSKNKLRIGDCLVIEEIKED.

It belongs to the Tfx family.

Putative transcriptional regulator. In Pyrococcus furiosus (strain ATCC 43587 / DSM 3638 / JCM 8422 / Vc1), this protein is Putative transcriptional regulatory protein PF0535.